The following is an 876-amino-acid chain: Alanine--tRNA ligase (876 aa).

Residues His560, His564, Cys662, and His666 each coordinate Zn(2+).

This sequence belongs to the class-II aminoacyl-tRNA synthetase family. Zn(2+) serves as cofactor.

It is found in the cytoplasm. The enzyme catalyses tRNA(Ala) + L-alanine + ATP = L-alanyl-tRNA(Ala) + AMP + diphosphate. Catalyzes the attachment of alanine to tRNA(Ala) in a two-step reaction: alanine is first activated by ATP to form Ala-AMP and then transferred to the acceptor end of tRNA(Ala). Also edits incorrectly charged Ser-tRNA(Ala) and Gly-tRNA(Ala) via its editing domain. This is Alanine--tRNA ligase from Synechococcus sp. (strain ATCC 27144 / PCC 6301 / SAUG 1402/1) (Anacystis nidulans).